Here is a 311-residue protein sequence, read N- to C-terminus: Probable dihydroorotate dehydrogenase A (fumarate) (311 aa).

Residues Lys45, 69-73, and Asn128 each bind substrate; that span reads NSMGL. 45–46 lines the FMN pocket; sequence KT. Asn128 is an FMN binding site. Cys131 acts as the Nucleophile in catalysis. FMN contacts are provided by Lys165 and Val193. 194–195 lines the substrate pocket; it reads NS. FMN-binding positions include Gly220, 248 to 249, and 270 to 271; these read GG and GT.

It belongs to the dihydroorotate dehydrogenase family. Type 1 subfamily. Homodimer. It depends on FMN as a cofactor.

Its subcellular location is the cytoplasm. The enzyme catalyses (S)-dihydroorotate + fumarate = orotate + succinate. It functions in the pathway pyrimidine metabolism; UMP biosynthesis via de novo pathway. In terms of biological role, catalyzes the conversion of dihydroorotate to orotate with fumarate as the electron acceptor. The sequence is that of Probable dihydroorotate dehydrogenase A (fumarate) (pyrDA) from Streptococcus pneumoniae serotype 4 (strain ATCC BAA-334 / TIGR4).